The sequence spans 65 residues: Beta-defensin 106A (65 aa).

Residues 1-20 form the signal peptide; the sequence is MRTFLFLFAVLFFLTPAKNE. Cystine bridges form between cysteine 26/cysteine 53, cysteine 33/cysteine 47, and cysteine 37/cysteine 54.

This sequence belongs to the beta-defensin family. In terms of assembly, monomer. Interacts with CCR2 (via extracellular N-terminal region); this interaction may preferentially require specific tyrosine sulfation on CCR2.

Its subcellular location is the secreted. It localises to the membrane. Has antibacterial activity. Acts as a ligand for C-C chemokine receptor CCR2. This Pongo pygmaeus (Bornean orangutan) protein is Beta-defensin 106A (DEFB106A).